The primary structure comprises 989 residues: Clumping factor A (989 aa).

The N-terminal stretch at 1–39 is a signal peptide; it reads MNMKKKEKHAIRKKSIGVASVLVGTLIGFGLLSSKEADA. Positions 9–20 match the YSIRK-G/S signaling motif motif; that stretch reads HAIRKKSIGVAS. 2 disordered regions span residues 34–205 and 529–960; these read SKEA…VSQA and FNNG…SEDE. Residues 40–542 form a ligand binding A region region; sequence SENSVTQSDS…SGSGDGIDKP (503 aa). Positions 47–65 are enriched in low complexity; the sequence is SDSASNESKSNDSSSVSAA. Positions 71-105 are enriched in polar residues; sequence TNVSDTKTSSNTNNGETSVAQNPAQQETTQSSSTN. 2 stretches are compositionally biased toward low complexity: residues 106 to 132 and 143 to 162; these read ATTEETPVTGEATTTTTNQANTPATTQ and NQTSNETTSNDTNTVSSVNS. The span at 163 to 205 shows a compositional bias: polar residues; the sequence is PQNSTNAENVSTTQDTSTEATPSNNESAPQNTDASNKDVVSQA. Residues 547 to 565 show a composition bias toward acidic residues; sequence QPDEPGEIEPIPEDSDSDP. A compositionally biased stretch (low complexity) spans 566-598; that stretch reads GSDSGSDSNSDSGSDSGSDSTSDSGSDSASDSD. Residues 599-917 show a composition bias toward acidic residues; the sequence is SASDSDSASD…DNDSDSDSNS (319 aa). Residues 918–936 show a composition bias toward low complexity; it reads DSESGSNNNVVPPNSPKNG. Residues 943 to 952 show a composition bias toward basic and acidic residues; sequence NEAKDSKEPL. The LPXTG sorting signal motif lies at 952–956; that stretch reads LPDTG. Position 955 is a pentaglycyl murein peptidoglycan amidated threonine (Thr-955). The propeptide at 956-989 is removed by sortase; that stretch reads GSEDEANTSLIWGLLASLGSLLLFRRKKENKDKK.

This sequence belongs to the serine-aspartate repeat-containing protein (SDr) family.

It localises to the secreted. It is found in the cell wall. Cell surface-associated protein implicated in virulence. Promotes bacterial attachment exclusively to the gamma-chain of human fibrinogen. Induces formation of bacterial clumps, which diminish the ability of group IIA phospholipase A2 to cause bacterial phospholipid hydrolysis and killing. Significantly decreases macrophage phagocytosis possibly thanks to the clumps, clumped bacteria being too large to be phagocytosed. Dominant factor responsible for human platelet aggregation, which may be an important mechanism for initiating infective endocarditis. This Staphylococcus aureus (strain N315) protein is Clumping factor A (clfA).